Here is a 171-residue protein sequence, read N- to C-terminus: NADH-quinone oxidoreductase subunit B (171 aa).

[4Fe-4S] cluster is bound by residues Cys34, Cys35, Cys99, and Cys128.

Belongs to the complex I 20 kDa subunit family. As to quaternary structure, NDH-1 is composed of 14 different subunits. Subunits NuoB, C, D, E, F, and G constitute the peripheral sector of the complex. [4Fe-4S] cluster serves as cofactor.

It localises to the cell inner membrane. It carries out the reaction a quinone + NADH + 5 H(+)(in) = a quinol + NAD(+) + 4 H(+)(out). NDH-1 shuttles electrons from NADH, via FMN and iron-sulfur (Fe-S) centers, to quinones in the respiratory chain. The immediate electron acceptor for the enzyme in this species is believed to be ubiquinone. Couples the redox reaction to proton translocation (for every two electrons transferred, four hydrogen ions are translocated across the cytoplasmic membrane), and thus conserves the redox energy in a proton gradient. This is NADH-quinone oxidoreductase subunit B from Sulfurihydrogenibium sp. (strain YO3AOP1).